The primary structure comprises 470 residues: Sulfate adenylyltransferase subunit 1 (470 aa).

Residues 22–236 enclose the tr-type G domain; the sequence is KELLRFITCG…YLETIKIDYA (215 aa). The segment at 31 to 38 is G1; the sequence is GSVDDGKS. A GTP-binding site is contributed by 31 to 38; the sequence is GSVDDGKS. Residues 89–93 are G2; the sequence is GITID. A G3 region spans residues 110–113; the sequence is DTPG. Residues 110-114 and 165-168 contribute to the GTP site; these read DTPGH and NKMD. The interval 165–168 is G4; the sequence is NKMD. A G5 region spans residues 202–204; that stretch reads SAL.

Belongs to the TRAFAC class translation factor GTPase superfamily. Classic translation factor GTPase family. CysN/NodQ subfamily. In terms of assembly, heterodimer composed of CysD, the smaller subunit, and CysN.

It carries out the reaction sulfate + ATP + H(+) = adenosine 5'-phosphosulfate + diphosphate. It functions in the pathway sulfur metabolism; hydrogen sulfide biosynthesis; sulfite from sulfate: step 1/3. Its function is as follows. With CysD forms the ATP sulfurylase (ATPS) that catalyzes the adenylation of sulfate producing adenosine 5'-phosphosulfate (APS) and diphosphate, the first enzymatic step in sulfur assimilation pathway. APS synthesis involves the formation of a high-energy phosphoric-sulfuric acid anhydride bond driven by GTP hydrolysis by CysN coupled to ATP hydrolysis by CysD. The chain is Sulfate adenylyltransferase subunit 1 from Francisella tularensis subsp. novicida (strain U112).